Here is a 102-residue protein sequence, read N- to C-terminus: uncharacterized protein (102 aa).

The next 2 membrane-spanning stretches (helical) occupy residues 28–48 and 81–101; these read YLNL…LISI and LSVL…AGIG.

It localises to the membrane. This is an uncharacterized protein from Saccharomyces cerevisiae (strain ATCC 204508 / S288c) (Baker's yeast).